The primary structure comprises 482 residues: Spore germination protein A1 (482 aa).

A run of 6 helical transmembrane segments spans residues 242-262 (VAILVDSSPFVLLVPVSLGIL), 284-304 (FASIFITLFLSSIYITLVSFH), 321-341 (ENVPFPPIFEALLMEVTIELL), 351-371 (PLGQTIGLVGGVVIGQAAVEA), 373-393 (LVSSILVIVVSVIALASFTVP), and 406-426 (FISMFSAAILGLYGIILFMLV).

Belongs to the GerABKA family.

Its subcellular location is the cell membrane. Functionally, forms a complex at the inner spore membrane which acts as a receptor for L-alanine, thus is involved in the stimulation of germination in response to alanine. Can stimulate germination in the absence of GerD and GerK gene products (fructose and glucose receptors, respectively), but the response is improved in their presence. The sequence is that of Spore germination protein A1 (gerAA) from Bacillus subtilis (strain 168).